Consider the following 152-residue polypeptide: Small ribosomal subunit protein uS15 (152 aa).

The segment covering 1-10 has biased composition (basic residues); the sequence is MAKMHTRTKG. Residues 1-26 are disordered; sequence MAKMHTRTKGKSGSTKPIRSESPAWS. Positions 11-26 are enriched in polar residues; it reads KSGSTKPIRSESPAWS.

The protein belongs to the universal ribosomal protein uS15 family. In terms of assembly, part of the 30S ribosomal subunit.

The chain is Small ribosomal subunit protein uS15 from Methanococcoides burtonii (strain DSM 6242 / NBRC 107633 / OCM 468 / ACE-M).